Here is a 328-residue protein sequence, read N- to C-terminus: 5,10-methylenetetrahydromethanopterin reductase (328 aa).

It belongs to the mer family.

Its subcellular location is the cytoplasm. The enzyme catalyses 5-methyl-5,6,7,8-tetrahydromethanopterin + oxidized coenzyme F420-(gamma-L-Glu)(n) + H(+) = 5,10-methylenetetrahydromethanopterin + reduced coenzyme F420-(gamma-L-Glu)(n). The protein operates within one-carbon metabolism; methanogenesis from CO(2); methyl-coenzyme M from 5,10-methylene-5,6,7,8-tetrahydromethanopterin: step 1/2. Functionally, catalyzes the reversible reduction of methylene-H(4)MPT to methyl-H(4)MPT. The sequence is that of 5,10-methylenetetrahydromethanopterin reductase from Methanosarcina mazei (strain ATCC BAA-159 / DSM 3647 / Goe1 / Go1 / JCM 11833 / OCM 88) (Methanosarcina frisia).